A 322-amino-acid polypeptide reads, in one-letter code: Cytochrome f (322 aa).

An N-terminal signal peptide occupies residues 1–35; sequence MQTRNTFSWTWIREEITRSISVSLMIYIITWSSIS. Residues tyrosine 38, cysteine 58, cysteine 61, and histidine 62 each contribute to the heme site. Residues 288-308 form a helical membrane-spanning segment; the sequence is VQGLLFFLGSVVLAQIFLVLK.

Belongs to the cytochrome f family. As to quaternary structure, the 4 large subunits of the cytochrome b6-f complex are cytochrome b6, subunit IV (17 kDa polypeptide, petD), cytochrome f and the Rieske protein, while the 4 small subunits are PetG, PetL, PetM and PetN. The complex functions as a dimer. Heme is required as a cofactor.

The protein resides in the plastid. It is found in the chloroplast thylakoid membrane. Functionally, component of the cytochrome b6-f complex, which mediates electron transfer between photosystem II (PSII) and photosystem I (PSI), cyclic electron flow around PSI, and state transitions. The chain is Cytochrome f from Aethionema cordifolium (Lebanon stonecress).